A 40-amino-acid polypeptide reads, in one-letter code: Cytolysin SmT-1 (40 aa).

Positions 3–12 (ALAGTIIAGA) are plays an important role in the hemolytic activity. Residues 11–30 (GASLGFQILDKVLGELGKVS) are N-terminal region.

It belongs to the actinoporin family. Sea anemone subfamily. As to quaternary structure, octamer or nonamer in membranes. Monomer in the soluble state.

Its subcellular location is the secreted. It is found in the nematocyst. The protein localises to the target cell membrane. Functionally, pore-forming protein that forms cations-selective hydrophilic pores of around 1 nm and causes cardiac stimulation and cytolysis. Pore formation is a multi-step process that involves specific recognition of membrane sphingomyelin (but neither cholesterol nor phosphatidylcholine) using aromatic rich region and adjacent phosphocholine (POC) binding site, firm binding to the membrane (mainly driven by hydrophobic interactions) accompanied by the transfer of the N-terminal region to the lipid-water interface and finally pore formation after oligomerization of monomers. This toxin shows hemolytic activities. This is Cytolysin SmT-1 from Stichodactyla mertensii (Merten's carpet sea anemone).